A 420-amino-acid polypeptide reads, in one-letter code: UDP-glucuronic acid decarboxylase 1 (420 aa).

At M1 the chain carries N-acetylmethionine. Residues 1-19 (MVSKGLLRLVSSVNRRKMK) are Cytoplasmic-facing. The chain crosses the membrane as a helical; Signal-anchor for type II membrane protein span at residues 20-40 (LLLGIALFAYAASVWGNFVNM). The Lumenal segment spans residues 41 to 420 (RSIQENGELK…RVKKGRTRHS (380 aa)). Phosphothreonine is present on T94. The NAD(+) site is built by G98, F99, V100, D119, N120, F122, T123, G124, D144, and V145. Residues L149 and Y150 each coordinate UDP-alpha-D-glucuronate. Residues L159 and S161 each coordinate NAD(+). K177 lines the UDP-alpha-D-glucuronate pocket. T178 is a binding site for NAD(+). The UDP-alpha-D-glucuronate site is built by N185, G188, K191, and R192. NAD(+) is bound by residues A200, Y231, and K235. Residue Y231 is the Proton acceptor of the active site. UDP-alpha-D-glucuronate contacts are provided by Y245, Q248, and E249. The NAD(+) site is built by T261, H267, and R272. An N-linked (GlcNAc...) asparagine glycan is attached at N316.

It belongs to the NAD(P)-dependent epimerase/dehydratase family. UDP-glucuronic acid decarboxylase subfamily. Homodimer and homotetramer. Interacts with AKT1. Requires NAD(+) as cofactor. As to expression, ubiquitous. Detected in heart, brain, spleen, lung, testis, liver, skeletal muscle and kidney.

The protein resides in the golgi apparatus. Its subcellular location is the golgi stack membrane. The catalysed reaction is UDP-alpha-D-glucuronate + H(+) = UDP-alpha-D-xylose + CO2. The protein operates within nucleotide-sugar biosynthesis; UDP-alpha-D-xylose biosynthesis; UDP-alpha-D-xylose from UDP-alpha-D-glucuronate: step 1/1. Its function is as follows. Catalyzes the NAD-dependent decarboxylation of UDP-glucuronic acid to UDP-xylose. Necessary for the biosynthesis of the core tetrasaccharide in glycosaminoglycan biosynthesis. The sequence is that of UDP-glucuronic acid decarboxylase 1 from Rattus norvegicus (Rat).